The sequence spans 205 residues: Transcriptional regulatory protein PdtaR (205 aa).

Positions 15–129 (RVLIAEDEAL…DLIPAIELAV (115 aa)) constitute a Response regulatory domain. Asp-65 is modified (4-aspartylphosphate). Residues 135–196 (ITALEGEVAT…TMKRVAEVVL (62 aa)) enclose the ANTAR domain.

In terms of processing, phosphorylated and activated by PdtaS.

It localises to the cytoplasm. Functionally, member of the two-component regulatory system PdtaR/PdtaS. This two-component system plays an essential role in mycobacterial adaptation to poor nutrient conditions. PdtaR probably acts at the level of transcriptional antitermination rather than transcriptional initiation. In addition, the PdtaR/PdtaS two-component system controls copper and nitric oxide (NO) resistance downstream of the intramembrane protease Rip1. This coupled Rip1/PdtaS/PdtaR circuit controls NO resistance and acute lung infection in mice by relieving PdtaR/PdtaS-mediated repression of isonitrile chalkophore biosynthesis. Two signals are required to fully inactivate the PdtaR/PdtaS system and mediate NO resistance: a cytoplasmic inhibitory signal through the PdtaS kinase mediated by direct sensing of NO and the production of PPE1-5', an NO-induced small RNA, to sequester PdtaR. The polypeptide is Transcriptional regulatory protein PdtaR (pdtaR) (Mycobacterium tuberculosis (strain CDC 1551 / Oshkosh)).